We begin with the raw amino-acid sequence, 294 residues long: Octopine-binding periplasmic protein (294 aa).

An N-terminal signal peptide occupies residues 1–20 (MRLKSIMCAALFVVAGQAAA). Residues cysteine 57 and cysteine 64 are joined by a disulfide bond.

It belongs to the bacterial solute-binding protein 3 family.

The protein resides in the periplasm. Component of the octopine active transport system probably consisting of four subunits: Q, M, P and T. The polypeptide is Octopine-binding periplasmic protein (occT) (Rhizobium meliloti (Ensifer meliloti)).